The sequence spans 253 residues: uncharacterized protein (253 aa).

The signal sequence occupies residues 1-19; sequence MHYLKKVTIYISLLILVSG. Cys-20 carries N-palmitoyl cysteine lipidation. Cys-20 is lipidated: S-diacylglycerol cysteine.

This sequence belongs to the staphylococcal tandem lipoprotein family.

Its subcellular location is the cell membrane. This is an uncharacterized protein from Staphylococcus epidermidis (strain ATCC 35984 / DSM 28319 / BCRC 17069 / CCUG 31568 / BM 3577 / RP62A).